Consider the following 290-residue polypeptide: Diaminopimelate epimerase (290 aa).

Substrate is bound by residues asparagine 14 and asparagine 67. Cysteine 76 functions as the Proton donor in the catalytic mechanism. Residues 77 to 78 (GN), asparagine 166, asparagine 199, and 217 to 218 (ER) each bind substrate. Residue cysteine 226 is the Proton acceptor of the active site. 227–228 (GT) is a substrate binding site.

It belongs to the diaminopimelate epimerase family. As to quaternary structure, homodimer.

Its subcellular location is the cytoplasm. It carries out the reaction (2S,6S)-2,6-diaminopimelate = meso-2,6-diaminopimelate. The protein operates within amino-acid biosynthesis; L-lysine biosynthesis via DAP pathway; DL-2,6-diaminopimelate from LL-2,6-diaminopimelate: step 1/1. Functionally, catalyzes the stereoinversion of LL-2,6-diaminopimelate (L,L-DAP) to meso-diaminopimelate (meso-DAP), a precursor of L-lysine and an essential component of the bacterial peptidoglycan. The sequence is that of Diaminopimelate epimerase from Geobacillus kaustophilus (strain HTA426).